The following is a 435-amino-acid chain: Probable tRNA pseudouridine synthase D (435 aa).

Aspartate 95 serves as the catalytic Nucleophile. In terms of domain architecture, TRUD spans 170-396 (GVPNYFGTQR…SSGTRRAVLV (227 aa)).

This sequence belongs to the pseudouridine synthase TruD family.

The catalysed reaction is uridine(13) in tRNA = pseudouridine(13) in tRNA. Could be responsible for synthesis of pseudouridine from uracil-13 in transfer RNAs. The polypeptide is Probable tRNA pseudouridine synthase D (Natronomonas pharaonis (strain ATCC 35678 / DSM 2160 / CIP 103997 / JCM 8858 / NBRC 14720 / NCIMB 2260 / Gabara) (Halobacterium pharaonis)).